The sequence spans 155 residues: Cell division protein SepF (155 aa).

The span at 16–35 (TEDEEEDVETVEESEDVEEE) shows a compositional bias: acidic residues. Positions 16-44 (TEDEEEDVETVEESEDVEEEESKKPQFIQ) are disordered.

Belongs to the SepF family. As to quaternary structure, homodimer. Interacts with FtsZ.

It is found in the cytoplasm. Cell division protein that is part of the divisome complex and is recruited early to the Z-ring. Probably stimulates Z-ring formation, perhaps through the cross-linking of FtsZ protofilaments. Its function overlaps with FtsA. This chain is Cell division protein SepF, found in Acetivibrio thermocellus (strain ATCC 27405 / DSM 1237 / JCM 9322 / NBRC 103400 / NCIMB 10682 / NRRL B-4536 / VPI 7372) (Clostridium thermocellum).